A 313-amino-acid polypeptide reads, in one-letter code: Proline iminopeptidase (313 aa).

Positions 35–298 (KPVVMLHGGP…SPASGHSAFE (264 aa)) constitute an AB hydrolase-1 domain. The active-site Nucleophile is the Ser-110. Residue Asp-266 is part of the active site. The Proton donor role is filled by His-294.

This sequence belongs to the peptidase S33 family. In terms of assembly, homooligomer.

The protein localises to the cytoplasm. The catalysed reaction is Release of N-terminal proline from a peptide.. In terms of biological role, may be involved in proline metabolism and sensitivity to ascamycin. Has ascamycin dealanylating activity. The sequence is that of Proline iminopeptidase (pip) from Xanthomonas citri (Xanthomonas campestris pv. citri).